Here is a 729-residue protein sequence, read N- to C-terminus: Fatty acid oxidation complex subunit alpha (729 aa).

Residues 1–189 (MLYQGETLQL…KVGLVDAVVA (189 aa)) are enoyl-CoA hydratase/isomerase. Position 296 (Asp296) interacts with substrate. Positions 311 to 729 (EAPKQAAVLG…LSDVSTGQPA (419 aa)) are 3-hydroxyacyl-CoA dehydrogenase. NAD(+) contacts are provided by residues Met324, Asp343, 400-402 (VVE), Lys407, and Ser429. His450 functions as the For 3-hydroxyacyl-CoA dehydrogenase activity in the catalytic mechanism. Asn453 contacts NAD(+). Substrate contacts are provided by Asn500 and Tyr660.

In the N-terminal section; belongs to the enoyl-CoA hydratase/isomerase family. The protein in the C-terminal section; belongs to the 3-hydroxyacyl-CoA dehydrogenase family. As to quaternary structure, heterotetramer of two alpha chains (FadB) and two beta chains (FadA).

It catalyses the reaction a (3S)-3-hydroxyacyl-CoA + NAD(+) = a 3-oxoacyl-CoA + NADH + H(+). The catalysed reaction is a (3S)-3-hydroxyacyl-CoA = a (2E)-enoyl-CoA + H2O. The enzyme catalyses a 4-saturated-(3S)-3-hydroxyacyl-CoA = a (3E)-enoyl-CoA + H2O. It carries out the reaction (3S)-3-hydroxybutanoyl-CoA = (3R)-3-hydroxybutanoyl-CoA. It catalyses the reaction a (3Z)-enoyl-CoA = a 4-saturated (2E)-enoyl-CoA. The catalysed reaction is a (3E)-enoyl-CoA = a 4-saturated (2E)-enoyl-CoA. It functions in the pathway lipid metabolism; fatty acid beta-oxidation. Its function is as follows. Involved in the aerobic and anaerobic degradation of long-chain fatty acids via beta-oxidation cycle. Catalyzes the formation of 3-oxoacyl-CoA from enoyl-CoA via L-3-hydroxyacyl-CoA. It can also use D-3-hydroxyacyl-CoA and cis-3-enoyl-CoA as substrate. The sequence is that of Fatty acid oxidation complex subunit alpha from Serratia proteamaculans (strain 568).